Consider the following 615-residue polypeptide: DNA mismatch repair protein MutL (615 aa).

Belongs to the DNA mismatch repair MutL/HexB family.

Its function is as follows. This protein is involved in the repair of mismatches in DNA. It is required for dam-dependent methyl-directed DNA mismatch repair. May act as a 'molecular matchmaker', a protein that promotes the formation of a stable complex between two or more DNA-binding proteins in an ATP-dependent manner without itself being part of a final effector complex. This chain is DNA mismatch repair protein MutL, found in Parabacteroides distasonis (strain ATCC 8503 / DSM 20701 / CIP 104284 / JCM 5825 / NCTC 11152).